The primary structure comprises 735 residues: Translation initiation factor IF-2, chloroplastic (735 aa).

Residues 239–411 (RRAPIVTILG…ILLMADIENY (173 aa)) enclose the tr-type G domain. Positions 248–255 (GHVDHGKT) are G1. Residue 248–255 (GHVDHGKT) participates in GTP binding. Positions 273-277 (GITQK) are G2. A G3 region spans residues 298-301 (DTPG). Residues 298–302 (DTPGH) and 352–355 (NKID) each bind GTP. The tract at residues 352 to 355 (NKID) is G4. Residues 388–390 (SAS) are G5.

It belongs to the TRAFAC class translation factor GTPase superfamily. Classic translation factor GTPase family. IF-2 subfamily.

The protein resides in the plastid. It is found in the chloroplast. One of the essential components for the initiation of protein synthesis. Protects formylmethionyl-tRNA from spontaneous hydrolysis and promotes its binding to the 30S ribosomal subunits. Also involved in the hydrolysis of GTP during the formation of the 70S ribosomal complex. The polypeptide is Translation initiation factor IF-2, chloroplastic (infB) (Guillardia theta (Cryptophyte)).